Consider the following 1061-residue polypeptide: Ribonuclease E (1061 aa).

The S1 motif domain occupies 39–119 (ANIYKGKITR…GNKGAALTTF (81 aa)). The segment at 57–112 (FVDYGAERHGFLPLKEIAREYFPANYSAHGRPNIKDVLREGQEVIVQIDKEERGNK) is interaction with RNA. An interaction with RNA 5'-terminal monophosphate region spans residues 169–170 (RT). Mg(2+)-binding residues include Asp303 and Asp346. Zn(2+)-binding residues include Cys404 and Cys407. Positions 404-407 (CPRC) are required for zinc-mediated homotetramerization and catalytic activity. Disordered stretches follow at residues 532-565 (FAMPDVPPAPTPAEPAAPVVAPAPKAAPATPAAP), 586-731 (EETK…KVRY), and 752-822 (EPIV…RYPT). Pro residues predominate over residues 536-546 (DVPPAPTPAEP). The segment covering 547 to 565 (AAPVVAPAPKAAPATPAAP) has biased composition (low complexity). Composition is skewed to basic and acidic residues over residues 598–608 (AEAKPERQQDR), 615–640 (NRRDRNERRDTRSERTEGSDNREENR), and 652–690 (ETRESRQQAEVTEKARTADEQQAPRRERSRRRNDDKRQA). Residues 796–814 (RRSRRSPRHLRVSGQRRRR) are compositionally biased toward basic residues. An interaction with enolase region spans residues 833–850 (ASPELASGKVWIRYPIVR). Positions 1021–1061 (EAPRHSDWQRPTFAFEGKGAAGGHTATHHASAAPARPQPVE) are interaction with PNPase. The interval 1031 to 1061 (PTFAFEGKGAAGGHTATHHASAAPARPQPVE) is disordered. A compositionally biased stretch (low complexity) spans 1043 to 1055 (GHTATHHASAAPA).

It belongs to the RNase E/G family. RNase E subfamily. In terms of assembly, component of the RNA degradosome, which is a multiprotein complex involved in RNA processing and mRNA degradation. Within the RNA degradosome, RNase E assembles into a homotetramer formed by a dimer of dimers. Tetramerization is essential for catalytic activity, but not for RNA-binding. Interacts with RhlB, PNPase (pnp) and enolase (eno). Interacts with DeaD at reduced temperature. It depends on Zn(2+) as a cofactor. Mg(2+) serves as cofactor.

Its subcellular location is the cytoplasm. It is found in the cell inner membrane. The enzyme catalyses Endonucleolytic cleavage of single-stranded RNA in A- and U-rich regions.. The presence of a 5'-monophosphate on substrate RNA accelerates its cleavage by catalytically activating the enzyme. Binding to the membrane stabilizes protein structure and increases affinity for the substrate. Its function is as follows. Endoribonuclease that plays a central role in RNA processing and decay. Required for the maturation of 5S and 16S rRNAs and the majority of tRNAs. Also involved in the degradation of most mRNAs. Can also process other RNA species, such as RNAI, a molecule that controls the replication of ColE1 plasmid, and the cell division inhibitor DicF-RNA. It initiates the decay of RNAs by cutting them internally near their 5'-end. It is able to remove poly(A) tails by an endonucleolytic process. Required to initiate rRNA degradation during both starvation and quality control; acts after RNase PH (rph) exonucleolytically digests the 3'-end of the 16S rRNA. Degradation of 16S rRNA leads to 23S rRNA degradation. Processes the 3 tRNA(Pro) precursors immediately after the 3'-CCA to generate the mature ends. In terms of biological role, prefers 5'-monophosphorylated substrates over 5'-triphosphorylated substrates. 5'-monophosphate-assisted cleavage requires at least 2 and preferably 3 or more unpaired 5'-terminal nucleotides. The optimal spacing between the 5' end and the scissile phosphate appears to be 8 nucleotides. Any sequence of unpaired nucleotides at the 5'-end is tolerated. This chain is Ribonuclease E, found in Escherichia coli (strain K12).